The primary structure comprises 217 residues: Probable transaldolase (217 aa).

Residue lysine 83 is the Schiff-base intermediate with substrate of the active site.

The protein belongs to the transaldolase family. Type 3B subfamily.

The protein localises to the cytoplasm. The enzyme catalyses D-sedoheptulose 7-phosphate + D-glyceraldehyde 3-phosphate = D-erythrose 4-phosphate + beta-D-fructose 6-phosphate. Its pathway is carbohydrate degradation; pentose phosphate pathway; D-glyceraldehyde 3-phosphate and beta-D-fructose 6-phosphate from D-ribose 5-phosphate and D-xylulose 5-phosphate (non-oxidative stage): step 2/3. Transaldolase is important for the balance of metabolites in the pentose-phosphate pathway. This is Probable transaldolase from Lactiplantibacillus plantarum (strain ATCC BAA-793 / NCIMB 8826 / WCFS1) (Lactobacillus plantarum).